The sequence spans 306 residues: MNEFINFDEISRETWQNLYNTSIAPLTYDELESIRSLNDEISLQDVEDVYLPLIHLLRLYKKNLEDMSYSKGLFLQKIVKTPPLIIGISGSVAVGKSTTARLLQLLLSRAFPKLTVDLVTTDGFLYTTDDLKNMGILDRKGFPESYDMEKLTSFLYHVKNGERFEVPIYSHETYDILPNQSQIIDSPDILIVEGINVLQNPQNQLLYISDFYDFSIYVDADEKLIEKWYLERFDSLLKLAKYDQTNFYHQFTKMPEDKVLNLARETWARVNRVNLREYIEPTRNRAEIILHKSENHHIDKIYLKKF.

Gly90–Ser97 contacts ATP.

Belongs to the prokaryotic pantothenate kinase family.

It is found in the cytoplasm. It catalyses the reaction (R)-pantothenate + ATP = (R)-4'-phosphopantothenate + ADP + H(+). Its pathway is cofactor biosynthesis; coenzyme A biosynthesis; CoA from (R)-pantothenate: step 1/5. The sequence is that of Pantothenate kinase from Lactococcus lactis subsp. cremoris (strain SK11).